A 41-amino-acid polypeptide reads, in one-letter code: Pi-stichotoxin-Hcr5c (41 aa).

3 disulfides stabilise this stretch: Cys-4–Cys-37, Cys-6–Cys-30, and Cys-20–Cys-38.

The protein belongs to the sea anemone type 3 (BDS) potassium channel toxin family.

It localises to the secreted. The protein resides in the nematocyst. Its function is as follows. Weakly and reversibly inhibits rat homomeric ASIC1 (isoform ASIC1a) (IC(50)=4.95 uM), and ASIC3 (IC(50)=17 uM). ASIC1a current inhibition and ASIC3 transient current inhibition are not complete, and reach a maximum of 70% inhibition and 80%, respectively. The protein is Pi-stichotoxin-Hcr5c of Radianthus crispa (Leathery sea anemone).